Here is a 1480-residue protein sequence, read N- to C-terminus: Cystic fibrosis transmembrane conductance regulator (1480 aa).

The Cytoplasmic portion of the chain corresponds to 1–77; sequence MQRSPLEKAS…KLINALRRCF (77 aa). Residues 78 to 98 form a helical membrane-spanning segment; that stretch reads FWRFMFYGIFLYLGEVTKAVQ. An ABC transmembrane type-1 1 domain is found at 81-365; sequence FMFYGIFLYL…WAVQTWYDSL (285 aa). Residues 99-122 lie on the Extracellular side of the membrane; that stretch reads PLLLGRIIASYDPDNKEERSIAIY. Residues 123-146 traverse the membrane as a helical segment; the sequence is LGIGLCLLFIVRTLLLHPAIFGLH. The Cytoplasmic portion of the chain corresponds to 147 to 195; the sequence is HIGMQMRIAMFSLIYKKTLKLSSRVLDKISIGQLVSLLSNNLNKFDEGL. Residues 196-216 form a helical membrane-spanning segment; it reads ALAHFVWIAPLQVALLMGLIW. Residues 217–222 lie on the Extracellular side of the membrane; it reads ELLQAS. Residues 223 to 243 traverse the membrane as a helical segment; the sequence is AFCGLGFLIVLALFQAGLGRM. Topologically, residues 244–298 are cytoplasmic; that stretch reads MMKYRDQRAGKINERLVITSEMIENIQSVKAYCWEEAMEKMIENLRQTELKLTRK. The helical transmembrane segment at 299–319 threads the bilayer; that stretch reads AAYVRYFNSSAFFFSGFFVVF. The Extracellular portion of the chain corresponds to 320 to 339; that stretch reads LSVLPYALIKGIVLRKIFTT. A helical membrane pass occupies residues 340-358; the sequence is ISFCIVLRMAVTRQFPWAV. Residues 359 to 858 lie on the Cytoplasmic side of the membrane; it reads QTWYDSLGAI…YLRYITVHKS (500 aa). ATP is bound by residues Trp-401, Ser-434, 458–465, and Gln-493; that span reads GSTGAGKT. The region spanning 423-646 is the ABC transporter 1 domain; sequence NGDDSLFFSN…RPDFSSKLMG (224 aa). The S-palmitoyl cysteine moiety is linked to residue Cys-524. A phosphoserine mark is found at Ser-549 and Ser-660. The disordered R region stretch occupies residues 654 to 831; it reads SAERRNSILT…EEINEEDLKE (178 aa). Ser-670 carries the post-translational modification Phosphoserine; by PKA. Lys-688 is covalently cross-linked (Glycyl lysine isopeptide (Lys-Gly) (interchain with G-Cter in ubiquitin)). Ser-700 and Ser-712 each carry phosphoserine. Thr-717 carries the post-translational modification Phosphothreonine. A phosphoserine mark is found at Ser-737, Ser-753, Ser-768, Ser-790, Ser-795, and Ser-813. A helical membrane pass occupies residues 859-879; that stretch reads LIFVLIWCLVIFLAEVAASLV. The ABC transmembrane type-1 2 domain occupies 859–1155; it reads LIFVLIWCLV…AVNSSIDVDS (297 aa). Residues 880–918 lie on the Extracellular side of the membrane; sequence VLWLLGNTPLQDKGNSTHSRNNSYAVIITSTSSYYVFYI. Residues Asn-894 and Asn-900 are each glycosylated (N-linked (GlcNAc...) asparagine). Residues 919–939 form a discontinuously helical membrane-spanning segment; sequence YVGVADTLLAMGFFRGLPLVH. Topologically, residues 940–990 are cytoplasmic; it reads TLITVSKILHNKMLHSVLQAPMSTLNTLKAGGILNRFSKDIAILDDLLPLT. The chain crosses the membrane as a helical span at residues 991 to 1011; that stretch reads IFDFIQLLLIVIGAIAVVAVL. At 1012–1013 the chain is on the extracellular side; that stretch reads QP. The chain crosses the membrane as a helical span at residues 1014–1034; that stretch reads YIFVATVPVIVAFIMLRAYFL. Topologically, residues 1035 to 1095 are cytoplasmic; the sequence is QTSQQLKQLE…TANWFLYLST (61 aa). The chain crosses the membrane as a helical span at residues 1096 to 1116; it reads LRWFQMRIEMIFVIFFIAVTF. Topologically, residues 1117–1130 are extracellular; it reads ISILTTGEGEGRVG. The chain crosses the membrane as a helical span at residues 1131–1151; that stretch reads IILTLAMNIMSTLQWAVNSSI. Residues 1152-1480 are Cytoplasmic-facing; it reads DVDSLMRSVS…TEEEVQDTRL (329 aa). The region spanning 1210 to 1443 is the ABC transporter 2 domain; sequence MTVKDLTAKY…RSLFQQAISP (234 aa). ATP contacts are provided by residues Tyr-1219 and 1244–1251; that span reads GRTGSGKS. An interaction with GORASP2 region spans residues 1386–1480; sequence RTLKQAFADC…TEEEVQDTRL (95 aa). Cys-1395 carries S-palmitoyl cysteine lipidation. A phosphoserine mark is found at Ser-1444 and Ser-1456. A disordered region spans residues 1452-1480; sequence HRNSSKCKSKPQIAALKEETEEEVQDTRL. Residues 1470–1480 show a composition bias toward acidic residues; sequence ETEEEVQDTRL. The short motif at 1478 to 1480 is the PDZ-binding element; the sequence is TRL.

It belongs to the ABC transporter superfamily. ABCC family. CFTR transporter (TC 3.A.1.202) subfamily. As to quaternary structure, monomer; does not require oligomerization for channel activity. May form oligomers in the membrane. Interacts with SLC26A3, SLC26A6 and NHERF1. Interacts with SHANK2. Interacts with MYO6. Interacts (via C-terminus) with GOPC (via PDZ domain); this promotes CFTR internalization and thereby decreases channel activity. Interacts with SLC4A7 through NHERF1. Found in a complex with MYO5B and RAB11A. Interacts with ANO1. Interacts with SLC26A8. Interacts with AHCYL1; the interaction increases CFTR activity. Interacts with CSE1L. The core-glycosylated form interacts with GORASP2 (via PDZ GRASP-type 1 domain) in respone to ER stress. Interacts with MARCHF2; the interaction leads to CFTR ubiqtuitination and degradation. Interacts with ADGRG2. Post-translationally, N-glycosylated. In terms of processing, phosphorylated; cAMP treatment promotes phosphorylation and activates the channel. Dephosphorylation decreases the ATPase activity (in vitro). Phosphorylation at PKA sites activates the channel. Phosphorylation at PKC sites enhances the response to phosphorylation by PKA. Phosphorylated by AMPK; this inhibits channel activity. Ubiquitinated, leading to its degradation in the lysosome. Deubiquitination by USP10 in early endosomes enhances its endocytic recycling to the cell membrane. Ubiquitinated by RNF185 during ER stress. Ubiquitinated by MARCHF2.

The protein resides in the apical cell membrane. It localises to the early endosome membrane. Its subcellular location is the cell membrane. The protein localises to the recycling endosome membrane. It is found in the endoplasmic reticulum membrane. The protein resides in the nucleus. The catalysed reaction is ATP + H2O + closed Cl(-) channel = ADP + phosphate + open Cl(-) channel.. It catalyses the reaction chloride(in) = chloride(out). It carries out the reaction hydrogencarbonate(in) = hydrogencarbonate(out). The enzyme catalyses ATP + H2O = ADP + phosphate + H(+). Functionally, epithelial ion channel that plays an important role in the regulation of epithelial ion and water transport and fluid homeostasis. Mediates the transport of chloride ions across the cell membrane. Possesses an intrinsic ATPase activity and utilizes ATP to gate its channel; the passive flow of anions through the channel is gated by cycles of ATP binding and hydrolysis by the ATP-binding domains. The ion channel is also permeable to HCO(3)(-); selectivity depends on the extracellular chloride concentration. Exerts its function also by modulating the activity of other ion channels and transporters. Contributes to the regulation of the pH and the ion content of the epithelial fluid layer. Modulates the activity of the epithelial sodium channel (ENaC) complex, in part by regulating the cell surface expression of the ENaC complex. May regulate bicarbonate secretion and salvage in epithelial cells by regulating the transporter SLC4A7. Can inhibit the chloride channel activity of ANO1. Plays a role in the chloride and bicarbonate homeostasis during sperm epididymal maturation and capacitation. This is Cystic fibrosis transmembrane conductance regulator from Pongo abelii (Sumatran orangutan).